We begin with the raw amino-acid sequence, 427 residues long: Putative B3 domain-containing protein Os04g0346900 (427 aa).

DNA-binding regions (TF-B3) lie at residues 25 to 118 (LVPS…FDTT) and 140 to 236 (KPQF…FGPN). The segment at 253–309 (TGEQQEAPSFSRRKCNNKKKSRFGEDDGNQQEMPCSRKGSGNKGRTSDRETKRMRKT) is disordered. Residues 263-273 (SRRKCNNKKKS) show a composition bias toward basic residues. The segment at residues 320-427 (WIKKEINEYV…TLWRVDIERC (108 aa)) is a DNA-binding region (TF-B3 3).

It is found in the nucleus. The polypeptide is Putative B3 domain-containing protein Os04g0346900 (Oryza sativa subsp. japonica (Rice)).